The chain runs to 454 residues: (Z)-3-hexen-1-ol acetyltransferase (454 aa).

Residues histidine 174 and aspartate 389 each act as proton acceptor in the active site.

The protein belongs to the plant acyltransferase family. In terms of tissue distribution, expressed in leaves and stems. Lower levels in flowers and barely detected in roots and siliques.

It carries out the reaction (3Z)-hex-3-en-1-ol + acetyl-CoA = (3Z)-hex-3-en-1-yl acetate + CoA. Its activity is regulated as follows. Inhibited by magnesium, calcium, cobalt, zinc and copper. Acyltransferase involved in the production of green leaf volatiles (GLVs). Uses acetyl-CoA as substrate, but not malonyl-CoA or benzoyl-CoA. Prefers primary, medium-chain-length, aliphatic alcohols. This chain is (Z)-3-hexen-1-ol acetyltransferase (CHAT), found in Arabidopsis thaliana (Mouse-ear cress).